The chain runs to 153 residues: Superoxide dismutase [Cu-Zn] (153 aa).

3 residues coordinate Cu cation: His-45, His-47, and His-62. Cys-56 and Cys-145 are joined by a disulfide. Residues His-62, His-70, His-79, and Asp-82 each coordinate Zn(2+). Residue His-119 coordinates Cu cation.

It belongs to the Cu-Zn superoxide dismutase family. In terms of assembly, homodimer. Cu cation is required as a cofactor. The cofactor is Zn(2+).

It localises to the cytoplasm. It carries out the reaction 2 superoxide + 2 H(+) = H2O2 + O2. Its function is as follows. Destroys radicals which are normally produced within the cells and which are toxic to biological systems. The sequence is that of Superoxide dismutase [Cu-Zn] (Sod) from Chymomyza amoena.